Reading from the N-terminus, the 91-residue chain is Ragulator complex protein LAMTOR5 homolog (91 aa).

The protein belongs to the LAMTOR5 family. As to quaternary structure, part of the Ragulator complex.

Its subcellular location is the cytoplasm. It is found in the lysosome. Regulator of the TOR pathway, a signaling cascade that promotes cell growth in response to growth factors, energy levels, and amino acids. As part of the Ragulator complex, may activate the TOR signaling cascade in response to amino acids. The chain is Ragulator complex protein LAMTOR5 homolog from Nematostella vectensis (Starlet sea anemone).